Consider the following 735-residue polypeptide: E3 ubiquitin-protein ligase SH3RF2 (735 aa).

An RING-type zinc finger spans residues 12-53 (CPVCFEKLDVTAKVLPCQHTFCKPCLQRIFKAHKELRCPECR). SH3 domains follow at residues 125-184 (DGVP…VIKQ) and 187-252 (QPPP…PNLS). 2 disordered regions span residues 260–301 (SKGH…GSGQ) and 335–373 (TSPSMLTQHGDRADFPASSAGQVSTSHPAPASPGHSTAM). Residues 273 to 289 (LMSSPSRGKATNTSTLR) show a composition bias toward polar residues. An interaction with PAK4 region spans residues 373–466 (MVSVPSSQQH…RHPTVCTTWA (94 aa)). In terms of domain architecture, SH3 3 spans 383–444 (LSTNMFVALH…PSDYVIPVFS (62 aa)). Disordered stretches follow at residues 472-534 (VSSQ…PVQS), 612-637 (ETPIKSEPPPKPPASAPPSILVKPEN), and 649-735 (VRFQ…FPSK). Over residues 523–534 (RKNGSLQRPVQS) the composition is skewed to polar residues. Over residues 617 to 627 (SEPPPKPPASA) the composition is skewed to pro residues. The interaction with PPP1CA stretch occupies residues 647-652 (KTVRFQ). Ser655 bears the Phosphoserine mark. Polar residues predominate over residues 715 to 735 (FSKTTPPVSTASVSQTLFPSK).

It belongs to the SH3RF family. As to quaternary structure, interacts with FASLG and PPP1CA. Interacts with PAK4 and TNFRSF1A. Interacts with DLK1, MAP3K10, MAPK8IP1/JIP1, MAPK8IP2/JIP2 and MAPK8IP3/JIP3. Interacts with RAC1 (both active GTP- or inactive GDP-bound forms). In terms of processing, autoubiquitinated.

The protein resides in the nucleus. It carries out the reaction S-ubiquitinyl-[E2 ubiquitin-conjugating enzyme]-L-cysteine + [acceptor protein]-L-lysine = [E2 ubiquitin-conjugating enzyme]-L-cysteine + N(6)-ubiquitinyl-[acceptor protein]-L-lysine.. It functions in the pathway protein modification; protein ubiquitination. Has E3 ubiquitin-protein ligase activity. Acts as an anti-apoptotic regulator of the JNK pathway by ubiquitinating and promoting the degradation of SH3RF1, a scaffold protein that is required for pro-apoptotic JNK activation. Facilitates TNF-alpha-mediated recruitment of adapter proteins TRADD and RIPK1 to TNFRSF1A and regulates PAK4 protein stability via inhibition of its ubiquitin-mediated proteasomal degradation. Inhibits PPP1CA phosphatase activity. The sequence is that of E3 ubiquitin-protein ligase SH3RF2 (Sh3rf2) from Rattus norvegicus (Rat).